The following is a 154-amino-acid chain: 6,7-dimethyl-8-ribityllumazine synthase (154 aa).

5-amino-6-(D-ribitylamino)uracil contacts are provided by residues F22, A56–E58, and V81–I83. E86–T87 is a binding site for (2S)-2-hydroxy-3-oxobutyl phosphate. H89 serves as the catalytic Proton donor. F114 provides a ligand contact to 5-amino-6-(D-ribitylamino)uracil. Position 128 (R128) interacts with (2S)-2-hydroxy-3-oxobutyl phosphate.

Belongs to the DMRL synthase family.

The catalysed reaction is (2S)-2-hydroxy-3-oxobutyl phosphate + 5-amino-6-(D-ribitylamino)uracil = 6,7-dimethyl-8-(1-D-ribityl)lumazine + phosphate + 2 H2O + H(+). The protein operates within cofactor biosynthesis; riboflavin biosynthesis; riboflavin from 2-hydroxy-3-oxobutyl phosphate and 5-amino-6-(D-ribitylamino)uracil: step 1/2. Its function is as follows. Catalyzes the formation of 6,7-dimethyl-8-ribityllumazine by condensation of 5-amino-6-(D-ribitylamino)uracil with 3,4-dihydroxy-2-butanone 4-phosphate. This is the penultimate step in the biosynthesis of riboflavin. The chain is 6,7-dimethyl-8-ribityllumazine synthase from Chlamydia abortus (strain DSM 27085 / S26/3) (Chlamydophila abortus).